Here is a 110-residue protein sequence, read N- to C-terminus: Cation efflux system protein CusF (110 aa).

Residues 1-21 (MKKALQVAMFSLFTVIGFNAQ) form the signal peptide.

In terms of assembly, the cus efflux system is composed of CusA, CusB, CusC and CusF. Interacts with copper-exporting P-type ATPase CopA; when this protein is precharged with copper it binds very little CopA.

It localises to the periplasm. In terms of biological role, part of a cation efflux system that mediates resistance to copper and silver. Binds one copper per polypeptide. The sequence is that of Cation efflux system protein CusF (cusF) from Escherichia coli (strain K12).